The sequence spans 363 residues: Peptide chain release factor 1 (363 aa).

Q236 carries the post-translational modification N5-methylglutamine. The interval 286–305 (KKEMERSTMRKSQIGSGDRS) is disordered.

Belongs to the prokaryotic/mitochondrial release factor family. Methylated by PrmC. Methylation increases the termination efficiency of RF1.

It is found in the cytoplasm. In terms of biological role, peptide chain release factor 1 directs the termination of translation in response to the peptide chain termination codons UAG and UAA. In Wolbachia pipientis subsp. Culex pipiens (strain wPip), this protein is Peptide chain release factor 1.